A 63-amino-acid polypeptide reads, in one-letter code: Large ribosomal subunit protein uL29 (63 aa).

The protein belongs to the universal ribosomal protein uL29 family.

This is Large ribosomal subunit protein uL29 from Alteromonas mediterranea (strain DSM 17117 / CIP 110805 / LMG 28347 / Deep ecotype).